The chain runs to 226 residues: Probable amino-acid ABC transporter permease protein YckA (226 aa).

Residues Ile27 to Gln215 form the ABC transmembrane type-1 domain. Helical transmembrane passes span Leu31–Ala51, Val73–Phe93, Ser94–Ile114, Val160–Leu180, and Met194–Phe214.

This sequence belongs to the binding-protein-dependent transport system permease family. HisMQ subfamily.

It localises to the cell membrane. Functionally, part of a binding-protein-dependent transport system. Probably responsible for the translocation of the substrate across the membrane. In Bacillus subtilis (strain 168), this protein is Probable amino-acid ABC transporter permease protein YckA (yckA).